We begin with the raw amino-acid sequence, 491 residues long: 2,3-bisphosphoglycerate-independent phosphoglycerate mutase (491 aa).

Residues aspartate 11 and serine 61 each contribute to the Mn(2+) site. Catalysis depends on serine 61, which acts as the Phosphoserine intermediate. Substrate is bound by residues histidine 118, 147-148, arginine 177, arginine 183, 248-251, and lysine 320; these read RD and RSDR. Positions 386, 390, 427, 428, and 445 each coordinate Mn(2+).

Belongs to the BPG-independent phosphoglycerate mutase family. Monomer. Mn(2+) serves as cofactor.

It catalyses the reaction (2R)-2-phosphoglycerate = (2R)-3-phosphoglycerate. The protein operates within carbohydrate degradation; glycolysis; pyruvate from D-glyceraldehyde 3-phosphate: step 3/5. Functionally, catalyzes the interconversion of 2-phosphoglycerate and 3-phosphoglycerate. The polypeptide is 2,3-bisphosphoglycerate-independent phosphoglycerate mutase (Aliarcobacter butzleri (strain RM4018) (Arcobacter butzleri)).